The sequence spans 370 residues: Cyclin-A3-4 (370 aa).

It belongs to the cyclin family. Cyclin AB subfamily. As to quaternary structure, interacts with FZR2/CCS52A1, FZR1/CCS52A2 and FZR3/CCS52B.

In Arabidopsis thaliana (Mouse-ear cress), this protein is Cyclin-A3-4 (CYCA3-4).